Consider the following 339-residue polypeptide: Intelectin-1 (339 aa).

Residues 1-18 (MLSYSLLLLALAFPAGHA) form the signal peptide. In terms of domain architecture, Fibrinogen C-terminal spans 58-108 (GDMNYGYRSCNEIKSSDSRAPDGIYTLATEDGESYQTFCDMTTNGGGWTLV). Cys-67 and Cys-96 form a disulfide bridge. Ca(2+)-binding residues include His-112, Glu-113, Asn-115, Gly-118, Gly-123, Asp-124, and Asp-159. 3 disulfide bridges follow: Cys-120/Cys-306, Cys-225/Cys-285, and Cys-277/Cys-291. Asn-189 carries N-linked (GlcNAc...) asparagine glycosylation. Positions 286, 288, 300, and 308 each coordinate Ca(2+). Residues 288–289 (EH) and Glu-300 contribute to the a carbohydrate site.

As to quaternary structure, homotrimer; disulfide-linked. Homohexamer; disulfide-linked. Forms primarily homotrimers in solution, but can also form homohexamers. N-glycosylated.

It localises to the secreted. The protein resides in the cytoplasmic vesicle. The protein localises to the secretory vesicle. Its function is as follows. Lectin that specifically recognizes microbial carbohydrate chains in a calcium-dependent manner. Binds to microbial glycans that contain a terminal acyclic 1,2-diol moiety, including beta-linked D-galactofuranose (beta-Galf) and D-phosphoglycerol-modified glycans. Binds to S.pneumoniae serotypes with glycans that contain beta-linked D-galactofuranose (beta-Galf) and with D-phosphoglycerol-modified glycans. Can bind a variety of monosaccharides (in vitro). Probably plays a role in the defense system against microorganisms. The sequence is that of Intelectin-1 (itln1) from Xenopus laevis (African clawed frog).